We begin with the raw amino-acid sequence, 30 residues long: Uperin-6.1 (30 aa).

In terms of tissue distribution, expressed by the skin dorsal glands.

It localises to the secreted. The sequence is that of Uperin-6.1 from Uperoleia inundata (Floodplain toadlet).